The chain runs to 174 residues: Peptidyl-prolyl cis-trans isomerase D, mitochondrial (174 aa).

The PPIase cyclophilin-type domain occupies 10-173 (FFQIKQGNTP…AACVIEDCGQ (164 aa)).

The protein belongs to the cyclophilin-type PPIase family. PPIase D subfamily.

It localises to the mitochondrion. It catalyses the reaction [protein]-peptidylproline (omega=180) = [protein]-peptidylproline (omega=0). Binds cyclosporin A (CsA). CsA mediates some of its effects via an inhibitory action on PPIase. Functionally, PPIases accelerate the folding of proteins. It catalyzes the cis-trans isomerization of proline imidic peptide bonds in oligopeptides. In Dictyostelium discoideum (Social amoeba), this protein is Peptidyl-prolyl cis-trans isomerase D, mitochondrial (cypD).